We begin with the raw amino-acid sequence, 90 residues long: Mitochondrial import inner membrane translocase subunit Tim8 A (90 aa).

A Twin CX3C motif motif is present at residues 36 to 59; sequence CWEKCMDKPGPKLDSRTEVCFVNC. Intrachain disulfides connect Cys36–Cys59 and Cys40–Cys55.

This sequence belongs to the small Tim family. As to quaternary structure, heterohexamer; composed of 3 copies of TIMM8A and 3 copies of TIMM13, named soluble 70 kDa complex. Associates with the TIM22 complex, whose core is composed of TIMM22.

The protein localises to the mitochondrion inner membrane. Functionally, mitochondrial intermembrane chaperone that participates in the import and insertion of some multi-pass transmembrane proteins into the mitochondrial inner membrane. Also required for the transfer of beta-barrel precursors from the TOM complex to the sorting and assembly machinery (SAM complex) of the outer membrane. Acts as a chaperone-like protein that protects the hydrophobic precursors from aggregation and guide them through the mitochondrial intermembrane space. The TIMM8-TIMM13 complex mediates the import of some proteins while the predominant TIMM9-TIMM10 70 kDa complex mediates the import of much more proteins. This chain is Mitochondrial import inner membrane translocase subunit Tim8 A (timm8a), found in Danio rerio (Zebrafish).